The primary structure comprises 347 residues: Fe(2+) transport protein 1 (347 aa).

A signal peptide spans 1–22; sequence MASNSALLMKTIFLVLIFVSFA. Over 23-52 the chain is Extracellular; the sequence is ISPATSTAPEECGSESANPCVNKAKALPLK. The helical transmembrane segment at 53 to 73 threads the bilayer; it reads VIAIFVILIASMIGVGAPLFS. Residues 74-84 lie on the Cytoplasmic side of the membrane; the sequence is RNVSFLQPDGN. The helical transmembrane segment at 85 to 105 threads the bilayer; that stretch reads IFTIIKCFASGIILGTGFMHV. Over 106-125 the chain is Extracellular; the sequence is LPDSFEMLSSICLEENPWHK. The chain crosses the membrane as a helical span at residues 126–146; that stretch reads FPFSGFLAMLSGLITLAIDSM. Over 147-192 the chain is Cytoplasmic; it reads ATSLYTSKNAVGIMPHGHGHGHGPANDVTLPIKEDDSSNAQLLRYR. Glycyl lysine isopeptide (Lys-Gly) (interchain with G-Cter in ubiquitin) cross-links involve residues Lys154 and Lys179. Residues 193 to 213 form a helical membrane-spanning segment; it reads VIAMVLELGIIVHSVVIGLSL. The Extracellular segment spans residues 214 to 224; the sequence is GATSDTCTIKG. Residues 225 to 245 traverse the membrane as a helical segment; that stretch reads LIAALCFHQMFEGMGLGGCIL. The Cytoplasmic segment spans residues 246 to 254; sequence QAEYTNMKK. Residues 255–275 form a helical membrane-spanning segment; that stretch reads FVMAFFFAVTTPFGIALGIAL. The Extracellular portion of the chain corresponds to 276–286; the sequence is STVYQDNSPKA. The chain crosses the membrane as a helical span at residues 287–307; it reads LITVGLLNACSAGLLIYMALV. Topologically, residues 308–326 are cytoplasmic; the sequence is DLLAAEFMGPKLQGSIKMQ. Residues 327-347 traverse the membrane as a helical segment; that stretch reads FKCLIAALLGCGGMSIIAKWA.

The protein belongs to the ZIP transporter (TC 2.A.5) family. As to quaternary structure, interacts with FREE1. Monoubiquitinated on several Lys residues. Monoubiquitination controls trafficking from the plasma membrane and targeting to the vacuole. In terms of tissue distribution, expressed in the external cell layers of the root including the lateral branching zone. Also detected in flowers before pollination.

It is found in the cell membrane. The protein resides in the early endosome. Its subcellular location is the golgi apparatus. It localises to the trans-Golgi network. The protein localises to the vacuole. In terms of biological role, high-affinity iron transporter that plays a key role in the uptake of iron from the rhizosphere across the plasma membrane in the root epidermal layer. Acts as the principal regulator of iron homeostasis in planta. Also mediates the heavy metals uptake under iron-deficiency by its ability to transport cobalt, cadmium, manganese and/or zinc ions. This chain is Fe(2+) transport protein 1 (IRT1), found in Arabidopsis thaliana (Mouse-ear cress).